The following is a 466-amino-acid chain: MAARAAAAAFLLLLIVGAATAAPDMSIISYNAEHGARGLEEGPTEAEARAAYDLWLAENGGGSPNALGGEHERRFLVFWDNLKFVDAHNARADERGGFRLGMNRFADLTNEEFRATFLGAKVAERSRAAGERYRHDGVEELPESVDWREKGAVAPVKNQGQCGSCWAFSAVSTVESINQLVTGEMITLSEQELVECSTNGQNSGCNGGLMDDAFDFIIKNGGIDTEDDYPYKAVDGKCDINRENAKVVSIDGFEDVPQNDEKSLQKAVAHQPVSVAIEAGGREFQLYHSGVFSGRCGTSLDHGVVAVGYGTDNGKDYWIVRNSWGPKWGESGYVRMERNINVTTGKCGIAMMASYPTKSGANPPKPSPTPPTPPTPPPPSAPDHVCDDNFSCPAGSTCCCAFGFRNLCLVWGCCPVEGATCCKDHASCCPPDYPVCNTRAGTCSASKNSPLSVKALKRTLAKLNTA.

The N-terminal stretch at 1–21 (MAARAAAAAFLLLLIVGAATA) is a signal peptide. The propeptide at 22 to 140 (APDMSIISYN…ERYRHDGVEE (119 aa)) is activation peptide. 3 disulfide bridges follow: Cys162/Cys205, Cys196/Cys238, and Cys296/Cys347. Cys165 is a catalytic residue. Catalysis depends on residues His302 and Asn322. Asn341 carries N-linked (GlcNAc...) asparagine glycosylation. The disordered stretch occupies residues 358–380 (KSGANPPKPSPTPPTPPTPPPPS). Residues 362–466 (NPPKPSPTPP…KRTLAKLNTA (105 aa)) constitute a propeptide, removed in mature form. The span at 363 to 380 (PPKPSPTPPTPPTPPPPS) shows a compositional bias: pro residues. Intrachain disulfides connect Cys386/Cys398 and Cys392/Cys413. Asn389 carries an N-linked (GlcNAc...) asparagine glycan.

Belongs to the peptidase C1 family. In terms of tissue distribution, expressed only in seeds.

Probable thiol protease. The protein is Oryzain beta chain of Oryza sativa subsp. japonica (Rice).